The chain runs to 124 residues: MTNLLFVALGGSIGAVLRYLMSIIMIQLFGSSFPFGTLLVNVLGSFFMGIVYALGQVSHVSPELKALVGVGLLGALTTFSTFSNETLLLMQQGYWFKSLINVLLNVSLCIFMVYLGQQLVFSRV.

The next 4 helical transmembrane spans lie at 4–24, 35–55, 62–82, and 95–115; these read LLFVALGGSIGAVLRYLMSII, FGTLLVNVLGSFFMGIVYALG, PELKALVGVGLLGALTTFSTF, and WFKSLINVLLNVSLCIFMVYL. Residues Gly-74 and Thr-77 each coordinate Na(+).

Belongs to the fluoride channel Fluc/FEX (TC 1.A.43) family.

It is found in the cell inner membrane. The catalysed reaction is fluoride(in) = fluoride(out). Na(+) is not transported, but it plays an essential structural role and its presence is essential for fluoride channel function. Functionally, fluoride-specific ion channel. Important for reducing fluoride concentration in the cell, thus reducing its toxicity. The protein is Fluoride-specific ion channel FluC of Shewanella denitrificans (strain OS217 / ATCC BAA-1090 / DSM 15013).